Consider the following 34-residue polypeptide: Phallacidin proprotein 1 (34 aa).

A propeptide spanning residues 1-10 (MSDINATRLP) is cleaved from the precursor. The segment at residues 11–17 (AWLVDCP) is a cross-link (cyclopeptide (Ala-Pro)). The 2'-cysteinyl-6'-hydroxytryptophan sulfoxide (Trp-Cys) cross-link spans 12-16 (WLVDC). Residues 18–34 (CVGDDVNRLLTRGESLC) constitute a propeptide that is removed on maturation.

This sequence belongs to the MSDIN fungal toxin family. In terms of processing, processed by the macrocyclase-peptidase enzyme POPB to yield a toxic cyclic heptapeptide. POPB first removes 10 residues from the N-terminus. Conformational trapping of the remaining peptide forces the enzyme to release this intermediate rather than proceed to macrocyclization. The enzyme rebinds the remaining peptide in a different conformation and catalyzes macrocyclization of the N-terminal 7 residues.

Functionally, major toxin that belongs to the bicyclic heptapeptides called phallotoxins. Although structurally related to amatoxins, phallotoxins have a different mode of action, which is the stabilization of F-actin. Phallotoxins are poisonous when administered parenterally, but not orally because of poor absorption. This chain is Phallacidin proprotein 1, found in Amanita bisporigera (Destroying angel).